An 89-amino-acid polypeptide reads, in one-letter code: Large ribosomal subunit protein bL27 (89 aa).

The disordered stretch occupies residues 1–26 (MATKKAGGSSKNGRDSAGRRLGLKKT).

Belongs to the bacterial ribosomal protein bL27 family.

The protein is Large ribosomal subunit protein bL27 of Orientia tsutsugamushi (strain Boryong) (Rickettsia tsutsugamushi).